Here is a 475-residue protein sequence, read N- to C-terminus: Putative amidase AmiD (475 aa).

Residues K93 and S166 each act as charge relay system in the active site. S190 functions as the Acyl-ester intermediate in the catalytic mechanism.

Belongs to the amidase family.

The catalysed reaction is a monocarboxylic acid amide + H2O = a monocarboxylate + NH4(+). This Mycobacterium bovis (strain ATCC BAA-935 / AF2122/97) protein is Putative amidase AmiD (amiD).